Consider the following 185-residue polypeptide: Elongation factor P (185 aa).

The protein belongs to the elongation factor P family.

The protein localises to the cytoplasm. It participates in protein biosynthesis; polypeptide chain elongation. In terms of biological role, involved in peptide bond synthesis. Stimulates efficient translation and peptide-bond synthesis on native or reconstituted 70S ribosomes in vitro. Probably functions indirectly by altering the affinity of the ribosome for aminoacyl-tRNA, thus increasing their reactivity as acceptors for peptidyl transferase. In Synechococcus elongatus (strain ATCC 33912 / PCC 7942 / FACHB-805) (Anacystis nidulans R2), this protein is Elongation factor P (efp).